A 648-amino-acid chain; its full sequence is Proton myo-inositol cotransporter (648 aa).

At 1–76 (MSRKASENVE…AARRQFQQDE (76 aa)) the chain is on the cytoplasmic side. Phosphoserine is present on residues S6, S47, and S50. A helical transmembrane segment spans residues 77 to 97 (TPAFVYVVAVFSALGGFLFGY). Residues 98 to 125 (DTGVVSGAMLLLKRQLSLDALWQELLVS) are Extracellular-facing. Residues 126–146 (STVGAAAVSALAGGALNGVFG) form a helical membrane-spanning segment. Residues 147–148 (RR) lie on the Cytoplasmic side of the membrane. Residues 149 to 169 (AAILLASALFTAGSAVLAAAN) form a helical membrane-spanning segment. The Extracellular segment spans residues 170 to 178 (NKETLLAGR). Residues 179-199 (LVVGLGIGIASMTVPVYIAEV) form a helical membrane-spanning segment. Over 200 to 212 (SPPNLRGRLVTIN) the chain is Cytoplasmic. Residues 213-233 (TLFITGGQFFASVVDGAFSYL) traverse the membrane as a helical segment. Residues 234-239 (QKDGWR) are Extracellular-facing. The helical transmembrane segment at 240-260 (YMLGLAAVPAVIQFFGFLFLP) threads the bilayer. At 261–324 (ESPRWLIQKG…RMLSYPPTRR (64 aa)) the chain is on the cytoplasmic side. The helical transmembrane segment at 325–345 (ALIVGCGLQMFQQLSGINTIM) threads the bilayer. Residues 346 to 363 (YYSATILQMSGVEDDRLA) are Extracellular-facing. Residues 364–384 (IWLASVTAFTNFIFTLVGVWL) form a helical membrane-spanning segment. The Cytoplasmic portion of the chain corresponds to 385 to 393 (VEKVGRRKL). A helical transmembrane segment spans residues 394-414 (TFGSLAGTTVALIILALGFVL). Topologically, residues 415-508 (SAQVSPRITF…NFCPTPYSWT (94 aa)) are extracellular. N-linked (GlcNAc...) asparagine glycosylation is found at N433, N458, and N485. The chain crosses the membrane as a helical span at residues 509-529 (ALLGLILYLVFFAPGMGPMPW). Over 530–549 (TVNSEIYPLWARSTGNACSS) the chain is Cytoplasmic. Residues 550 to 570 (GINWIFNVLVSLTFLHTAEYL) form a helical membrane-spanning segment. Residues 571–573 (TYY) lie on the Extracellular side of the membrane. A helical membrane pass occupies residues 574–594 (GAFFLYAGFAAVGLLFIYGCL). Over 595–648 (PETKGKKLEEIESLFDNRLCTCGTSDSDEGRYIEYIRVKGSNYHLSDNDASDVE) the chain is Cytoplasmic. Phosphoserine is present on residues S640 and S645.

This sequence belongs to the major facilitator superfamily. Sugar transporter (TC 2.A.1.1) family. In terms of processing, glycosylated. Predominantly expressed in the brain.

The protein localises to the cell membrane. The catalysed reaction is myo-inositol(out) + H(+)(out) = myo-inositol(in) + H(+)(in). H(+)-myo-inositol cotransporter. Can also transport related stereoisomers. This is Proton myo-inositol cotransporter from Homo sapiens (Human).